A 167-amino-acid chain; its full sequence is Ribosome maturation factor RimM (167 aa).

Residues 94–165 form the PRC barrel domain; the sequence is EHEYYYSDII…TIKITPMEGL (72 aa).

This sequence belongs to the RimM family. Binds ribosomal protein uS19.

It is found in the cytoplasm. Functionally, an accessory protein needed during the final step in the assembly of 30S ribosomal subunit, possibly for assembly of the head region. Essential for efficient processing of 16S rRNA. May be needed both before and after RbfA during the maturation of 16S rRNA. It has affinity for free ribosomal 30S subunits but not for 70S ribosomes. The sequence is that of Ribosome maturation factor RimM from Staphylococcus epidermidis (strain ATCC 12228 / FDA PCI 1200).